Here is a 1328-residue protein sequence, read N- to C-terminus: Tubulin polyglutamylase TTLL5 (1328 aa).

Residues 1 to 22 are disordered; sequence MPVVMARDLEETASSSEDEDLA. A TTL domain is found at 62-407; it reads RYHLSYKIVR…VCQDPAQRTS (346 aa). ATP contacts are provided by residues Lys-180, 186-187, 208-211, and 221-223; these read RG, SRYI, and KFD. Residue Arg-186 participates in a protein binding. Arg-247 is a binding site for L-glutamate. 268–269 is a binding site for ATP; that stretch reads TN. Residues Tyr-270, Ser-271, and Lys-293 each contribute to the L-glutamate site. Residues Asp-353, Glu-366, and Asn-368 each coordinate Mg(2+). A c-MTBD region region spans residues 378-488; sequence PLDLKIKASM…RGGFIRIFPT (111 aa). Lys-384 is an L-glutamate binding site. 7 disordered regions span residues 411 to 436, 585 to 631, 834 to 853, 948 to 975, 1006 to 1032, 1085 to 1129, and 1212 to 1271; these read IYPS…SASD, AQPA…QAKY, HSKS…KGDH, PALL…PAGL, SSAK…EGED, RSSA…LQTG, and RISS…QLNG. Polar residues predominate over residues 420-432; it reads RNPFQKPQRTRPL. The span at 597-617 shows a compositional bias: acidic residues; that stretch reads ESEEEEEVGLDNDDEEQEASQ. A compositionally biased stretch (low complexity) spans 838 to 847; it reads SKNSSSYSDS. Polar residues-rich tracts occupy residues 1116–1128, 1214–1227, 1234–1248, and 1257–1271; these read THSS…SLQT, SSAT…NTLP, PNSS…SNHK, and QRAS…QLNG.

The protein belongs to the tubulin--tyrosine ligase family. In terms of assembly, interacts with the transcriptional coactivators NCOA1/SRC-1 and NCOA2/TIF2. Mg(2+) serves as cofactor. In terms of tissue distribution, highly expressed in brain, kidney, liver, spleen and testis. Expressed in heart, lung, muscle and trachea.

Its subcellular location is the cell projection. The protein localises to the cilium. The protein resides in the cytoplasm. It localises to the cytoskeleton. It is found in the cilium basal body. Its subcellular location is the nucleus. The enzyme catalyses L-glutamyl-[protein] + L-glutamate + ATP = gamma-L-glutamyl-L-glutamyl-[protein] + ADP + phosphate + H(+). It catalyses the reaction (L-glutamyl)(n)-gamma-L-glutamyl-L-glutamyl-[protein] + L-glutamate + ATP = (L-glutamyl)(n+1)-gamma-L-glutamyl-L-glutamyl-[protein] + ADP + phosphate + H(+). In terms of biological role, polyglutamylase which modifies tubulin, generating polyglutamate side chains on the gamma-carboxyl group of specific glutamate residues within the C-terminal tail of tubulin. Preferentially mediates ATP-dependent initiation step of the polyglutamylation reaction over the elongation step. Preferentially modifies the alpha-tubulin tail over a beta-tail. Required for CCSAP localization to both polyglutamylated spindle and cilia microtubules. Increases the effects of transcriptional coactivator NCOA2/TIF2 in glucocorticoid receptor-mediated repression and induction and in androgen receptor-mediated induction. The sequence is that of Tubulin polyglutamylase TTLL5 from Mus musculus (Mouse).